Here is a 271-residue protein sequence, read N- to C-terminus: Octanoyltransferase LipM (271 aa).

One can recognise a BPL/LPL catalytic domain in the interval glycine 31–phenylalanine 242. Catalysis depends on cysteine 144, which acts as the Acyl-thioester intermediate.

It belongs to the octanoyltransferase LipM family. As to quaternary structure, monomer.

The enzyme catalyses octanoyl-[ACP] + L-lysyl-[protein] = N(6)-octanoyl-L-lysyl-[protein] + holo-[ACP] + H(+). Its pathway is protein modification; protein lipoylation via endogenous pathway; protein N(6)-(lipoyl)lysine from octanoyl-[acyl-carrier-protein]. Its function is as follows. Catalyzes the transfer of endogenously produced octanoic acid from octanoyl-acyl-carrier-protein onto the lipoyl domain of GcvH, an intermediate carrier during protein lipoylation. In Clostridioides difficile (strain 630) (Peptoclostridium difficile), this protein is Octanoyltransferase LipM.